A 325-amino-acid chain; its full sequence is Aquaporin-8 (325 aa).

Over 1 to 10 the chain is Cytoplasmic; it reads MALRSPARDY. The chain crosses the membrane as a helical span at residues 11–31; sequence LVSMIGELVGTFLFLFFAFAA. Over 32–52 the chain is Extracellular; it reads AQTANQPNGTKPLTPNATDTS. N-linked (GlcNAc...) asparagine glycosylation is found at Asn-39 and Asn-47. A helical membrane pass occupies residues 53-73; the sequence is KLLYIALAFGASLAANVWVFF. Residues 74–100 are Cytoplasmic-facing; that stretch reads RVSGGQFNPAVTLALVLIRAVSPTKAL. The NPA 1 signature appears at 81–83; sequence NPA. A helical transmembrane segment spans residues 101–121; sequence ILIPAQLVGGSLAAAAVKGII. At 122 to 140 the chain is on the extracellular side; it reads PGDDILFAVSLGPGVANVQ. The helical transmembrane segment at 141–161 threads the bilayer; that stretch reads GLFIELLLTFMLVFTILMLVA. Residues 162-167 lie on the Cytoplasmic side of the membrane; it reads EKTKST. Residues 168-188 form a helical membrane-spanning segment; sequence FVAPIGIGFSLFIGHLVGIFW. The Extracellular segment spans residues 189–212; it reads TGAGINPARAFSPALIQASFPSYH. Residues 194–196 carry the NPA 2 motif; the sequence is NPA. A helical membrane pass occupies residues 213–233; the sequence is WIYWLGPALGSFLAAGLYLGL. At 234-325 the chain is on the cytoplasmic side; sequence KEMKYELVGG…GSPDSTDLPT (92 aa). Disordered stretches follow at residues 279–298 and 305–325; these read LGQF…LERG and EDDP…DLPT. The span at 286-298 shows a compositional bias: basic and acidic residues; that stretch reads TEGHRSPVDLERG.

It belongs to the MIP/aquaporin (TC 1.A.8) family.

The protein resides in the cell membrane. The enzyme catalyses H2O2(out) = H2O2(in). It carries out the reaction H2O(in) = H2O(out). Its function is as follows. Plasma membrane water channel that regulates the reactive oxygen species (ROS)-signaling pathway through its capacity to act as a membrane channel for hydrogen peroxide uptake. Required for the formation of infection structures and infection, especially on host leaves where it is essential for the penetration into the host. Regulates the expression of proteins related to redox-regulation and intracellular signal transduction and plays a role in the distribution of mitochondria in the hyphae. The polypeptide is Aquaporin-8 (Botryotinia fuckeliana (strain B05.10) (Noble rot fungus)).